The chain runs to 561 residues: Asparagine synthetase [glutamine-hydrolyzing] (561 aa).

The active-site For GATase activity is the Cys-2. The region spanning 2–191 is the Glutamine amidotransferase type-2 domain; that stretch reads CGIWALFGSD…PGHYEVLDLK (190 aa). Residues 49 to 53, 75 to 77, and Asp-97 contribute to the L-glutamine site; these read RLAVV and NGE. An Asparagine synthetase domain is found at 213–536; that stretch reads HALYDSVEKL…PGRADWLTHY (324 aa). ATP contacts are provided by residues Leu-256, Ile-288, and 363 to 364; that span reads SG. At Lys-385 the chain carries N6-acetyllysine. Thr-545 is modified (phosphothreonine). The residue at position 557 (Ser-557) is a Phosphoserine.

The enzyme catalyses L-aspartate + L-glutamine + ATP + H2O = L-asparagine + L-glutamate + AMP + diphosphate + H(+). It participates in amino-acid biosynthesis; L-asparagine biosynthesis; L-asparagine from L-aspartate (L-Gln route): step 1/1. This Cricetulus griseus (Chinese hamster) protein is Asparagine synthetase [glutamine-hydrolyzing] (ASNS).